Here is a 329-residue protein sequence, read N- to C-terminus: MAP kinase-activated protein kinase 2 (329 aa).

ATP contacts are provided by residues 1–7 and K22; that span reads LGINGKV. The Protein kinase domain maps to 1-254; that stretch reads LGINGKVLRI…ITEFMNHPWI (254 aa). Residue 68 to 70 participates in staurosporine binding; sequence ECL. The active-site Proton acceptor is D115. T151 carries the phosphothreonine; by MAPK14 modification. A Phosphoserine; by MAPK14 modification is found at S201. At S257 the chain carries Phosphoserine; by autocatalysis. An autoinhibitory helix region spans residues 257–293; the sequence is STKVPQTPLHTSRVLKEDKERWEDVKEEMTSALATMR. Phosphothreonine; by MAPK14 is present on T263. K282 is covalently cross-linked (Glycyl lysine isopeptide (Lys-Gly) (interchain with G-Cter in SUMO)). A Nuclear export signal (NES) motif is present at residues 285-294; that stretch reads MTSALATMRV. The interval 295-319 is p38 MAPK-binding site; it reads DYEQIKIKKIEDASNPLLLKRRKKA. 2 short sequence motifs (bipartite nuclear localization signal) span residues 300–303 and 314–318; these read KIKK and KRRKK.

This sequence belongs to the protein kinase superfamily. CAMK Ser/Thr protein kinase family. Heterodimer with p38-alpha/MAPK14; this heterodimer forms a stable complex: molecules are positioned 'face to face' so that the ATP-binding sites of both kinases are at the heterodimer interface. Interacts with PHC2. Interacts with HSF1. Sumoylation inhibits the protein kinase activity. In terms of processing, phosphorylated and activated by MAP kinase p38-alpha/MAPK14 at Thr-151, Ser-201 and Thr-263.

The protein resides in the cytoplasm. Its subcellular location is the nucleus. It catalyses the reaction L-seryl-[protein] + ATP = O-phospho-L-seryl-[protein] + ADP + H(+). The enzyme catalyses L-threonyl-[protein] + ATP = O-phospho-L-threonyl-[protein] + ADP + H(+). Activated following phosphorylation by p38-alpha/MAPK14 following various stresses. Inhibited following sumoylation. Specifically inhibited by pyrrolopyridine inhibitors. Its function is as follows. Stress-activated serine/threonine-protein kinase involved in cytokine production, endocytosis, reorganization of the cytoskeleton, cell migration, cell cycle control, chromatin remodeling, DNA damage response and transcriptional regulation. Following stress, it is phosphorylated and activated by MAP kinase p38-alpha/MAPK14, leading to phosphorylation of substrates. Phosphorylates serine in the peptide sequence, Hyd-X-R-X(2)-S, where Hyd is a large hydrophobic residue. Phosphorylates ALOX5, CDC25B, CDC25C, CEP131, ELAVL1, HNRNPA0, HSP27/HSPB1, KRT18, KRT20, LIMK1, LSP1, PABPC1, PARN, PDE4A, RCSD1, RPS6KA3, TAB3 and TTP/ZFP36. Phosphorylates HSF1; leading to the interaction with HSP90 proteins and inhibiting HSF1 homotrimerization, DNA-binding and transactivation activities. Mediates phosphorylation of HSP27/HSPB1 in response to stress, leading to the dissociation of HSP27/HSPB1 from large small heat-shock protein (sHsps) oligomers and impairment of their chaperone activities and ability to protect against oxidative stress effectively. Involved in inflammatory response by regulating tumor necrosis factor (TNF) and IL6 production post-transcriptionally: acts by phosphorylating AU-rich elements (AREs)-binding proteins ELAVL1, HNRNPA0, PABPC1 and TTP/ZFP36, leading to regulation of the stability and translation of TNF and IL6 mRNAs. Phosphorylation of TTP/ZFP36, a major post-transcriptional regulator of TNF, promotes its binding to 14-3-3 proteins and reduces its ARE mRNA affinity, leading to inhibition of dependent degradation of ARE-containing transcripts. Phosphorylates CEP131 in response to cellular stress following ultraviolet irradiation which promotes binding of CEP131 to 14-3-3 proteins and inhibits formation of novel centriolar satellites. Also involved in late G2/M checkpoint following DNA damage through a process of post-transcriptional mRNA stabilization: following DNA damage, relocalizes from nucleus to cytoplasm and phosphorylates HNRNPA0 and PARN, leading to stabilization of GADD45A mRNA. Involved in toll-like receptor signaling pathway (TLR) in dendritic cells: required for acute TLR-induced macropinocytosis by phosphorylating and activating RPS6KA3. This Cricetulus longicaudatus (Long-tailed dwarf hamster) protein is MAP kinase-activated protein kinase 2 (MAPKAPK2).